Consider the following 261-residue polypeptide: uncharacterized protein (261 aa).

A divalent metal cation-binding residues include His7, His9, Glu96, His132, His156, and Asp211.

Belongs to the metallo-dependent hydrolases superfamily. TatD-type hydrolase family. Requires a divalent metal cation as cofactor.

This is an uncharacterized protein from Mycoplasma pneumoniae (strain ATCC 29342 / M129 / Subtype 1) (Mycoplasmoides pneumoniae).